The sequence spans 1793 residues: Nucleoporin NUP145 (1793 aa).

9 GLFG repeats span residues 50–53 (GLFG), 143–146 (GLFG), 255–258 (GLFG), 282–285 (GLFG), 292–295 (GLFG), 306–309 (GLFG), 336–339 (GLFG), 381–384 (GLFG), and 395–398 (GLFG). 4 disordered regions span residues 404–583 (GSAF…QQPQ), 740–859 (RTDL…EPGA), 999–1043 (GDDD…DDTF), and 1066–1097 (EVANHAQRQGTLSPEPQDADTPLPSREWPEDE). The segment covering 417 to 431 (NQSTGTSLFGNTQQK) has biased composition (polar residues). GLFG repeat units follow at residues 434–437 (GLFG), 446–449 (GLFG), 470–473 (GLFG), 481–484 (GLFG), and 496–499 (GLFG). A compositionally biased stretch (low complexity) spans 437–459 (GSTTTNTSGGLFGSTNTGTSTFG). The segment covering 467–483 (TGGGLFGSKPAGTGGLF) has biased composition (gly residues). A compositionally biased stretch (polar residues) spans 500 to 511 (NLNTNAQTQQPA). The stretch at 514 to 517 (GLFG) is one GLFG 15 repeat. Residues 518–535 (NLGQNNQAKPSLFGTSTT) are compositionally biased toward low complexity. The stretch at 539-542 (GLFG) is one GLFG 16 repeat. Composition is skewed to polar residues over residues 546–575 (AQQQTGSLFGTSTAQQQPQTGLGASLFGSS) and 801–813 (STANGTNGANGAK). Over residues 814–823 (SSPVAAASPP) the composition is skewed to low complexity. Basic and acidic residues predominate over residues 826-840 (EQVKGKELAVVHEEE). The 137-residue stretch at 857 to 993 (PGAYWMSPTA…GVWAFSVEHF (137 aa)) folds into the Peptidase S59 domain. A nucleoporin RNA-binding motif (NRM) region spans residues 859-992 (AYWMSPTADD…TGVWAFSVEH (134 aa)). Residues 999 to 1013 (GDDDDYDDDDYETEP) are compositionally biased toward acidic residues. The segment covering 1025–1037 (TSPSISKSSTSPI) has biased composition (low complexity).

Belongs to the nucleoporin GLFG family. In terms of assembly, component of the nuclear pore complex (NPC). NPC constitutes the exclusive means of nucleocytoplasmic transport. NPCs allow the passive diffusion of ions and small molecules and the active, nuclear transport receptor-mediated bidirectional transport of macromolecules such as proteins, RNAs, ribonucleoparticles (RNPs), and ribosomal subunits across the nuclear envelope. Due to its 8-fold rotational symmetry, all subunits are present with 8 copies or multiples thereof. In terms of processing, NUP145 is autocatalytically cleaved in NUP145N and NUP145C.

The protein localises to the nucleus. It is found in the nuclear pore complex. Its subcellular location is the nucleus membrane. Its function is as follows. Functions as a component of the nuclear pore complex (NPC). NPC components, collectively referred to as nucleoporins (NUPs), can play the role of both NPC structural components and of docking or interaction partners for transiently associated nuclear transport factors. Active directional transport is assured by both, a Phe-Gly (FG) repeat affinity gradient for these transport factors across the NPC and a transport cofactor concentration gradient across the nuclear envelope. NUP145 is autocatalytically cleaved in vivo in 2 polypeptides which assume different functions in the NPC. NUP145N as one of the FG repeat nucleoporins participates in karyopherin interactions and contains part of the autocatalytic cleavage activity. NUP145C as part of the NUP84 complex is involved in nuclear poly(A)+ RNA and tRNA export. The polypeptide is Nucleoporin NUP145 (NUP145) (Chaetomium thermophilum (strain DSM 1495 / CBS 144.50 / IMI 039719) (Thermochaetoides thermophila)).